The chain runs to 427 residues: Trigger factor (427 aa).

The 86-residue stretch at 163 to 248 (GDTVVIDFVG…IHEVKAKEVP (86 aa)) folds into the PPIase FKBP-type domain.

It belongs to the FKBP-type PPIase family. Tig subfamily.

It localises to the cytoplasm. It catalyses the reaction [protein]-peptidylproline (omega=180) = [protein]-peptidylproline (omega=0). In terms of biological role, involved in protein export. Acts as a chaperone by maintaining the newly synthesized protein in an open conformation. Functions as a peptidyl-prolyl cis-trans isomerase. The chain is Trigger factor from Streptococcus pneumoniae (strain Taiwan19F-14).